Reading from the N-terminus, the 423-residue chain is Flotillin-1 (423 aa).

Belongs to the band 7/mec-2 family. Flotillin subfamily. Heterooligomeric complex of flotillin-1 and flotillin-2 and caveolin-1 and caveolin-2. In terms of tissue distribution, normally expressed in growing retinal exons of newly differentiated ganglion cells at the retinal margin. After optic nerve injury, expressed in all retinal ganglion cells and retinal axons. Also expressed in endothelial cells, spinal cord, larval and adult skin, muscle processes, thymus and gill macrophages.

Its subcellular location is the cell membrane. It is found in the endosome. The protein localises to the membrane. The protein resides in the caveola. It localises to the melanosome. Its subcellular location is the membrane raft. May act as a scaffolding protein within caveolar membranes, functionally participating in formation of caveolae or caveolae-like vesicles. This Carassius auratus (Goldfish) protein is Flotillin-1 (flot1).